Here is a 595-residue protein sequence, read N- to C-terminus: Elongation factor 4 (595 aa).

In terms of domain architecture, tr-type G spans 2 to 184 (KNIRNFSIIA…QIVEKIPAPK (183 aa)). Residues 14 to 19 (DHGKST) and 131 to 134 (NKID) each bind GTP.

It belongs to the TRAFAC class translation factor GTPase superfamily. Classic translation factor GTPase family. LepA subfamily.

It is found in the cell inner membrane. The catalysed reaction is GTP + H2O = GDP + phosphate + H(+). Functionally, required for accurate and efficient protein synthesis under certain stress conditions. May act as a fidelity factor of the translation reaction, by catalyzing a one-codon backward translocation of tRNAs on improperly translocated ribosomes. Back-translocation proceeds from a post-translocation (POST) complex to a pre-translocation (PRE) complex, thus giving elongation factor G a second chance to translocate the tRNAs correctly. Binds to ribosomes in a GTP-dependent manner. In Ruthia magnifica subsp. Calyptogena magnifica, this protein is Elongation factor 4.